The primary structure comprises 162 residues: ATP synthase subunit b (162 aa).

A helical membrane pass occupies residues 4 to 24 (INWGSIIYQLIAFCVLLWLLS).

Belongs to the ATPase B chain family. As to quaternary structure, F-type ATPases have 2 components, F(1) - the catalytic core - and F(0) - the membrane proton channel. F(1) has five subunits: alpha(3), beta(3), gamma(1), delta(1), epsilon(1). F(0) has three main subunits: a(1), b(2) and c(10-14). The alpha and beta chains form an alternating ring which encloses part of the gamma chain. F(1) is attached to F(0) by a central stalk formed by the gamma and epsilon chains, while a peripheral stalk is formed by the delta and b chains.

Its subcellular location is the cell membrane. Its function is as follows. F(1)F(0) ATP synthase produces ATP from ADP in the presence of a proton or sodium gradient. F-type ATPases consist of two structural domains, F(1) containing the extramembraneous catalytic core and F(0) containing the membrane proton channel, linked together by a central stalk and a peripheral stalk. During catalysis, ATP synthesis in the catalytic domain of F(1) is coupled via a rotary mechanism of the central stalk subunits to proton translocation. Component of the F(0) channel, it forms part of the peripheral stalk, linking F(1) to F(0). The sequence is that of ATP synthase subunit b from Halalkalibacterium halodurans (strain ATCC BAA-125 / DSM 18197 / FERM 7344 / JCM 9153 / C-125) (Bacillus halodurans).